The primary structure comprises 205 residues: Probable thymidylate kinase (205 aa).

10–17 (GIDGSGKS) contacts ATP.

Belongs to the thymidylate kinase family.

It carries out the reaction dTMP + ATP = dTDP + ADP. The sequence is that of Probable thymidylate kinase from Methanosarcina barkeri (strain Fusaro / DSM 804).